A 98-amino-acid polypeptide reads, in one-letter code: Small ribosomal subunit protein bS6 (98 aa).

The protein belongs to the bacterial ribosomal protein bS6 family.

Binds together with bS18 to 16S ribosomal RNA. The sequence is that of Small ribosomal subunit protein bS6 from Levilactobacillus brevis (strain ATCC 367 / BCRC 12310 / CIP 105137 / JCM 1170 / LMG 11437 / NCIMB 947 / NCTC 947) (Lactobacillus brevis).